The primary structure comprises 231 residues: Large ribosomal subunit protein uL1 (231 aa).

Belongs to the universal ribosomal protein uL1 family. Part of the 50S ribosomal subunit.

Binds directly to 23S rRNA. The L1 stalk is quite mobile in the ribosome, and is involved in E site tRNA release. Functionally, protein L1 is also a translational repressor protein, it controls the translation of the L11 operon by binding to its mRNA. The protein is Large ribosomal subunit protein uL1 of Neisseria gonorrhoeae (strain ATCC 700825 / FA 1090).